We begin with the raw amino-acid sequence, 225 residues long: UPF0173 metal-dependent hydrolase PF1764 (225 aa).

This sequence belongs to the UPF0173 family.

The protein is UPF0173 metal-dependent hydrolase PF1764 of Pyrococcus furiosus (strain ATCC 43587 / DSM 3638 / JCM 8422 / Vc1).